A 238-amino-acid chain; its full sequence is Ribonuclease PH (238 aa).

Residues Arg-86 and 124-126 (GTR) each bind phosphate.

It belongs to the RNase PH family. In terms of assembly, homohexameric ring arranged as a trimer of dimers.

The enzyme catalyses tRNA(n+1) + phosphate = tRNA(n) + a ribonucleoside 5'-diphosphate. Phosphorolytic 3'-5' exoribonuclease that plays an important role in tRNA 3'-end maturation. Removes nucleotide residues following the 3'-CCA terminus of tRNAs; can also add nucleotides to the ends of RNA molecules by using nucleoside diphosphates as substrates, but this may not be physiologically important. Probably plays a role in initiation of 16S rRNA degradation (leading to ribosome degradation) during starvation. The protein is Ribonuclease PH of Parvibaculum lavamentivorans (strain DS-1 / DSM 13023 / NCIMB 13966).